The primary structure comprises 553 residues: Putative ABC transporter ATP-binding protein BCE_3323 (553 aa).

ABC transporter domains lie at 7-245 and 295-527; these read AEIN…FRPF and LSAE…SINR. Residues 41–48 and 329–336 each bind ATP; these read GGSGSGKT and GKNGTGKS.

It belongs to the ABC transporter superfamily.

It is found in the cell membrane. Functionally, probably part of an ABC transporter complex. Responsible for energy coupling to the transport system. This is Putative ABC transporter ATP-binding protein BCE_3323 from Bacillus cereus (strain ATCC 10987 / NRS 248).